Here is a 144-residue protein sequence, read N- to C-terminus: Single-stranded DNA-binding protein 3 (144 aa).

Residues 1-103 (MNKVVLIGRL…IVAEEVQFLE (103 aa)) form the SSB domain. A compositionally biased stretch (polar residues) spans 112-134 (MANDQFNNGNENGSMQLPDNNDI). The segment at 112-144 (MANDQFNNGNENGSMQLPDNNDITPIDDGDIPF) is disordered.

Homotetramer.

This chain is Single-stranded DNA-binding protein 3 (ssb3), found in Clostridium acetobutylicum (strain ATCC 824 / DSM 792 / JCM 1419 / IAM 19013 / LMG 5710 / NBRC 13948 / NRRL B-527 / VKM B-1787 / 2291 / W).